A 1087-amino-acid polypeptide reads, in one-letter code: Platelet-derived growth factor receptor alpha (1087 aa).

Residues M1 to A24 form the signal peptide. Residues E25–A530 are Extracellular-facing. Ig-like C2-type domains follow at residues P27–E114 and I118–W211. The cysteines at positions 50 and 101 are disulfide-linked. 2 N-linked (GlcNAc...) asparagine glycosylation sites follow: N77 and N104. C151 and C192 are disulfide-bonded. 7 N-linked (GlcNAc...) asparagine glycosylation sites follow: N216, N282, N309, N356, N362, N461, and N471. Ig-like C2-type domains lie at I217–N309, K315–S409, and P417–V519. The cysteines at positions 238 and 293 are disulfide-linked. Cysteines 438 and 503 form a disulfide. A helical transmembrane segment spans residues A531–W551. At K552–L1087 the chain is on the cytoplasmic side. Phosphotyrosine; by autocatalysis is present on residues Y574 and Y576. Positions L595–L970 constitute a Protein kinase domain. ATP is bound by residues L601–V609 and K629. Y722, Y733, Y744, Y756, and Y764 each carry phosphotyrosine; by autocatalysis. Residue D818 is the Proton acceptor of the active site. A phosphotyrosine; by autocatalysis mark is found at Y849, Y988, and Y1017. Residues Y1017–T1064 are disordered. A compositionally biased stretch (polar residues) spans S1039 to F1057.

It belongs to the protein kinase superfamily. Tyr protein kinase family. CSF-1/PDGF receptor subfamily. As to quaternary structure, interacts with homodimeric pdgfa, pdgfb and pdgfc, and with heterodimers formed by pdgfa and pdgfb. Monomer in the absence of bound ligand. Interaction with dimeric pdgfa, pdgfb and/or pdgfc leads to receptor dimerization, where both pdgfra homodimers and heterodimers with pdgfrb are observed. Ubiquitinated, leading to its internalization and degradation. In terms of processing, autophosphorylated on tyrosine residues upon ligand binding. Autophosphorylation occurs in trans, i.e. one subunit of the dimeric receptor phosphorylates tyrosine residues on the other subunit.

It is found in the cell membrane. It localises to the cell projection. Its subcellular location is the cilium. The protein localises to the golgi apparatus. The enzyme catalyses L-tyrosyl-[protein] + ATP = O-phospho-L-tyrosyl-[protein] + ADP + H(+). With respect to regulation, present in an inactive conformation in the absence of bound ligand. Binding of pdgfa and/or pdgfb leads to dimerization and activation by autophosphorylation on tyrosine residues. Functionally, tyrosine-protein kinase that acts as a cell-surface receptor for pdgfa, pdgfb and pdgfc and plays an essential role in the regulation of embryonic development, cell proliferation, survival and chemotaxis. Depending on the context, promotes or inhibits cell proliferation and cell migration. Plays an important role in the differentiation of bone marrow-derived mesenchymal stem cells. Required for normal skeleton development. Required for normal development of the gastrointestinal tract. Plays a role in cell migration and chemotaxis in wound healing. Plays a role in platelet activation, secretion of agonists from platelet granules, and in thrombin-induced platelet aggregation. Binding of its cognate ligands - homodimeric pdgfa, homodimeric pdgfb, heterodimers formed by pdgfa and pdgfb or homodimeric pdgfc -leads to the activation of several signaling cascades; the response depends on the nature of the bound ligand and is modulated by the formation of heterodimers between pdgfra and pdgfrb. Phosphorylates pik3r1, plcg1, and ptpn11. Activation of plcg1 leads to the production of the cellular signaling molecules diacylglycerol and inositol 1,4,5-trisphosphate, mobilization of cytosolic Ca(2+) and the activation of protein kinase C. Phosphorylates pik3r1, the regulatory subunit of phosphatidylinositol 3-kinase, and thereby mediates activation of the akt1 signaling pathway. Mediates activation of hras and of the MAP kinases mapk1/erk2 and/or mapk3/erk1. Promotes activation of stat family members stat1, stat3 and stat5a and/or stat5b. Receptor signaling is down-regulated by protein phosphatases that dephosphorylate the receptor and its down-stream effectors, and by rapid internalization of the activated receptor. The polypeptide is Platelet-derived growth factor receptor alpha (pdgfra) (Xenopus laevis (African clawed frog)).